The sequence spans 269 residues: Tryptophan synthase alpha chain (269 aa).

Catalysis depends on proton acceptor residues Glu-49 and Asp-60.

The protein belongs to the TrpA family. Tetramer of two alpha and two beta chains.

It catalyses the reaction (1S,2R)-1-C-(indol-3-yl)glycerol 3-phosphate + L-serine = D-glyceraldehyde 3-phosphate + L-tryptophan + H2O. It participates in amino-acid biosynthesis; L-tryptophan biosynthesis; L-tryptophan from chorismate: step 5/5. Functionally, the alpha subunit is responsible for the aldol cleavage of indoleglycerol phosphate to indole and glyceraldehyde 3-phosphate. The chain is Tryptophan synthase alpha chain from Salmonella arizonae (strain ATCC BAA-731 / CDC346-86 / RSK2980).